The chain runs to 62 residues: Large ribosomal subunit protein uL30 (62 aa).

Belongs to the universal ribosomal protein uL30 family. As to quaternary structure, part of the 50S ribosomal subunit.

The chain is Large ribosomal subunit protein uL30 from Shewanella frigidimarina (strain NCIMB 400).